A 685-amino-acid polypeptide reads, in one-letter code: Polyphosphate kinase (685 aa).

Residue Asn45 coordinates ATP. 2 residues coordinate Mg(2+): Arg375 and Arg405. The active-site Phosphohistidine intermediate is His435. ATP is bound by residues Tyr468, Arg564, and His592.

It belongs to the polyphosphate kinase 1 (PPK1) family. Requires Mg(2+) as cofactor. An intermediate of this reaction is the autophosphorylated ppk in which a phosphate is covalently linked to a histidine residue through a N-P bond.

The catalysed reaction is [phosphate](n) + ATP = [phosphate](n+1) + ADP. Catalyzes the reversible transfer of the terminal phosphate of ATP to form a long-chain polyphosphate (polyP). This chain is Polyphosphate kinase, found in Neisseria meningitidis serogroup C (strain 053442).